We begin with the raw amino-acid sequence, 69 residues long: MILLVALLSGLGLFLGVLAGLAGLILGSIFVVSPFVLLSAGGLALQVLNFLLLFISTIAGGFLGLLSFI.

2 helical membrane-spanning segments follow: residues 7-29 and 44-66; these read LLSG…LGSI and ALQV…LGLL.

Its subcellular location is the cell membrane. This is an uncharacterized protein from Archaeoglobus fulgidus (strain ATCC 49558 / DSM 4304 / JCM 9628 / NBRC 100126 / VC-16).